Reading from the N-terminus, the 190-residue chain is Adenylate kinase (190 aa).

Gly11–Thr16 is a binding site for ATP. Positions Ser31–Val60 are NMP. Residues Thr32, Arg37, Glu58 to Val60, Gly86 to Arg89, and Gln93 contribute to the AMP site. Residues Glu127–Asp137 form an LID region. Arg128 serves as a coordination point for ATP. Residues Arg134 and Arg146 each coordinate AMP. Gly174 provides a ligand contact to ATP.

Belongs to the adenylate kinase family. Monomer.

The protein resides in the cytoplasm. It catalyses the reaction AMP + ATP = 2 ADP. It participates in purine metabolism; AMP biosynthesis via salvage pathway; AMP from ADP: step 1/1. Catalyzes the reversible transfer of the terminal phosphate group between ATP and AMP. Plays an important role in cellular energy homeostasis and in adenine nucleotide metabolism. In Flavobacterium johnsoniae (strain ATCC 17061 / DSM 2064 / JCM 8514 / BCRC 14874 / CCUG 350202 / NBRC 14942 / NCIMB 11054 / UW101) (Cytophaga johnsonae), this protein is Adenylate kinase.